Consider the following 97-residue polypeptide: UstYa family oxidase VicYc (97 aa).

2 short sequence motifs (HXXHC) span residues 11–15 (HELHC) and 38–42 (HANHC).

This sequence belongs to the ustYa family.

The protein operates within mycotoxin biosynthesis. In terms of biological role, ustYa family oxidase, part of the gene cluster that mediates the biosynthesis of the secondary metabolite victorin, the molecular basis for Victoria blight of oats. The role of vicYc within the pathway has still to be determined. The pathway starts with the processing of the precursor vicA1 by several endopeptidases including kexin proteases as well as the cluster-specific S28 family peptidases vicPa and vicPb to produce 7 identical copies of the hexapeptide Gly-Leu-Lys-Leu-Ala-Phe. After being excised from the precursor peptide, the core peptides are cyclized and modified post-translationally by enzymes encoded within the gene cluster. The ustYa family oxidase vicYb is required for the formation of the macrocycle in victorin and the copper amine oxidases (CAOs) vicK1 and vicK2 are responsible for converting victorin to the active form by oxidizing the N-terminal glycyl residue in the peptides to glyoxylate. Relaxed substrate specificity of enzymes in the victorin biosynthetic pathway results in a metabolic grid that produces a set of analogs including victorinines B, C, E or HV-toxin M. The sequence is that of UstYa family oxidase VicYc from Bipolaris victoriae (strain FI3) (Victoria blight of oats agent).